The following is a 315-amino-acid chain: Homoserine kinase (315 aa).

ATP is bound at residue 97–107 (PPARGLGSSAT).

This sequence belongs to the GHMP kinase family. Homoserine kinase subfamily.

The protein resides in the cytoplasm. The catalysed reaction is L-homoserine + ATP = O-phospho-L-homoserine + ADP + H(+). The protein operates within amino-acid biosynthesis; L-threonine biosynthesis; L-threonine from L-aspartate: step 4/5. Functionally, catalyzes the ATP-dependent phosphorylation of L-homoserine to L-homoserine phosphate. This chain is Homoserine kinase, found in Synechococcus sp. (strain CC9311).